Consider the following 225-residue polypeptide: Immune-associated nucleotide-binding protein 1 (225 aa).

An AIG1-type G domain is found at 6–214; that stretch reads CPVTNLLLLG…YTENMHRKIK (209 aa). The segment at 15–22 is G1; that stretch reads GRSENGKS. 15–23 serves as a coordination point for GTP; the sequence is GRSENGKSS. The interval 42–46 is G2; sequence DMDQR. The G3 stretch occupies residues 64 to 67; that stretch reads DTPG. A G4 region spans residues 134–137; the sequence is TGGD. The tract at residues 173–175 is G5; that stretch reads NNK. N174 provides a ligand contact to GTP.

The protein belongs to the TRAFAC class TrmE-Era-EngA-EngB-Septin-like GTPase superfamily. AIG1/Toc34/Toc159-like paraseptin GTPase family. IAN subfamily. Mostly expressed in pollen.

In Arabidopsis thaliana (Mouse-ear cress), this protein is Immune-associated nucleotide-binding protein 1.